A 108-amino-acid chain; its full sequence is Small ribosomal subunit protein eS25B (108 aa).

The segment covering 1-20 has biased composition (low complexity); it reads MPPKQQLSKAAKAAAALAGG. Positions 1–30 are disordered; the sequence is MPPKQQLSKAAKAAAALAGGKKSKKKWSKK. Residue proline 2 is modified to N,N-dimethylproline; by NTM1. The span at 21 to 30 shows a compositional bias: basic residues; that stretch reads KKSKKKWSKK.

Belongs to the eukaryotic ribosomal protein eS25 family. In terms of assembly, component of the small ribosomal subunit (SSU). Mature yeast ribosomes consist of a small (40S) and a large (60S) subunit. The 40S small subunit contains 1 molecule of ribosomal RNA (18S rRNA) and 33 different proteins (encoded by 57 genes). The large 60S subunit contains 3 rRNA molecules (25S, 5.8S and 5S rRNA) and 46 different proteins (encoded by 81 genes).

Its subcellular location is the cytoplasm. Functionally, component of the ribosome, a large ribonucleoprotein complex responsible for the synthesis of proteins in the cell. The small ribosomal subunit (SSU) binds messenger RNAs (mRNAs) and translates the encoded message by selecting cognate aminoacyl-transfer RNA (tRNA) molecules. The large subunit (LSU) contains the ribosomal catalytic site termed the peptidyl transferase center (PTC), which catalyzes the formation of peptide bonds, thereby polymerizing the amino acids delivered by tRNAs into a polypeptide chain. The nascent polypeptides leave the ribosome through a tunnel in the LSU and interact with protein factors that function in enzymatic processing, targeting, and the membrane insertion of nascent chains at the exit of the ribosomal tunnel. The sequence is that of Small ribosomal subunit protein eS25B from Saccharomyces cerevisiae (strain ATCC 204508 / S288c) (Baker's yeast).